We begin with the raw amino-acid sequence, 161 residues long: Large ribosomal subunit protein eL21 (161 aa).

Belongs to the eukaryotic ribosomal protein eL21 family.

This is Large ribosomal subunit protein eL21 (rpl-21) from Caenorhabditis elegans.